Here is a 106-residue protein sequence, read N- to C-terminus: Acidic phospholipase A2 PhTX-III (106 aa).

Residues tyrosine 23, glycine 25, and glycine 27 each contribute to the Ca(2+) site. Intrachain disulfides connect cysteine 24–cysteine 40, cysteine 39–cysteine 75, cysteine 45–cysteine 106, cysteine 46–cysteine 68, and cysteine 55–cysteine 66. Residue histidine 43 is part of the active site. Ca(2+) is bound at residue aspartate 44. The active site involves aspartate 69.

Ca(2+) serves as cofactor. Expressed by the venom gland.

Its subcellular location is the secreted. It catalyses the reaction a 1,2-diacyl-sn-glycero-3-phosphocholine + H2O = a 1-acyl-sn-glycero-3-phosphocholine + a fatty acid + H(+). Partially inhibited by magnesium ions and completely inhibited by zinc ions These divalent cations may act as competitive antagonists of the cofactor. In terms of biological role, snake venom phospholipase A2 (PLA2) that induces inflammatory response, with local edema and release of cytokines IL-1 alpha, IL-6 and TNF-alpha. Does not exhibit myotoxic, anticoagulant and antibacterial effects. Release of pro-inflammatory cytokines may be due to mast cell degranulation, and edema may be induced by arachidonic acid that results from the PLA2 catalytic activity. PLA2 catalyzes the calcium-dependent hydrolysis of the 2-acyl groups in 3-sn-phosphoglycerides. The protein is Acidic phospholipase A2 PhTX-III of Bothrocophias hyoprora (Amazonian hognose viper).